A 118-amino-acid polypeptide reads, in one-letter code: Small ribosomal subunit protein uS13 (118 aa).

Residues 99-118 form a disordered region; that stretch reads GQRTRTNARTRKGPRKAIKK.

The protein belongs to the universal ribosomal protein uS13 family. In terms of assembly, part of the 30S ribosomal subunit. Forms a loose heterodimer with protein S19. Forms two bridges to the 50S subunit in the 70S ribosome.

In terms of biological role, located at the top of the head of the 30S subunit, it contacts several helices of the 16S rRNA. In the 70S ribosome it contacts the 23S rRNA (bridge B1a) and protein L5 of the 50S subunit (bridge B1b), connecting the 2 subunits; these bridges are implicated in subunit movement. Contacts the tRNAs in the A and P-sites. The polypeptide is Small ribosomal subunit protein uS13 (Xylella fastidiosa (strain M12)).